The chain runs to 549 residues: Polymorphic pseudokinase ROP5 (549 aa).

The signal sequence occupies residues 1–24 (MATKLARLATWLVLVGCLLWRAGA). The Protein kinase domain occupies 234–527 (LKLVEPLRVG…LEAMETPEFL (294 aa)). The ATP site is built by Arg-241, Asp-244, Arg-245, Ser-246, Lys-263, Met-337, Pro-338, Ala-340, Asp-343, and Asp-393. Asp-244 is an ADP binding site. ADP contacts are provided by Ser-246, Lys-263, Met-337, Pro-338, and Ala-340. An ADP-binding site is contributed by Asp-393. Asp-393 and Asp-407 together coordinate Mg(2+). An N-linked (GlcNAc...) asparagine glycan is attached at Asn-434. The cysteines at positions 458 and 492 are disulfide-linked.

The protein belongs to the protein kinase superfamily. Ser/Thr protein kinase family. Component of a complex at least composed of ROP18 and ROP5. Interacts with GRA7. Interacts with ROP17. Interacts with mouse IRGA6/IIGP1; the interaction results in inhibition of IRGA6/IIGP1 GTPase activity and/or oligomerization.

The protein resides in the secreted. Its subcellular location is the parasitophorous vacuole. It localises to the cytoplasmic vesicle. The protein localises to the secretory vesicle. It is found in the rhoptry. Pseudokinase. Essential for virulence in the type I lineage. Mediates parasite survival in mouse monocytes. Required for the parasite ability to resist mouse innate immune effectors triggered by the IFN-gamma (IFNG). Reduces the accumulation of mouse IRGA6 (IIGP1) and IRGB6 (TGTP1/TGTP2), immunity-related GTPases (IRGs) that protect mice from infection by certain intracellular pathogens, on the parasitophorous vacuole and IRG-mediated killing of parasites by mouse cells. Regulates the activity of ROP18, an active kinase that targets IRGs to prevent IRG-mediated parasite killing by mouse cells. Acts as an allosteric inhibitor of mouse IRGA6 (IIGP1). Does not affect IFN-gamma (IFNG)-mediated parasite killing in human cells that do not possess the large variety of IRGs. The protein is Polymorphic pseudokinase ROP5 of Toxoplasma gondii.